The primary structure comprises 188 residues: Putative 3-methyladenine DNA glycosylase (188 aa).

The protein belongs to the DNA glycosylase MPG family.

The sequence is that of Putative 3-methyladenine DNA glycosylase from Ehrlichia ruminantium (strain Welgevonden).